A 390-amino-acid chain; its full sequence is GTPase Obg (390 aa).

The Obg domain occupies 1–159 (MKFVDEATIL…RELTLELLLL (159 aa)). Residues 128–147 (SRFKSSVNRAPRQKTNGTKG) are disordered. The segment covering 129 to 145 (RFKSSVNRAPRQKTNGT) has biased composition (polar residues). The OBG-type G domain occupies 160 to 333 (ADVGMLGLPN…LCWDVMNFLK (174 aa)). Residues 166-173 (GLPNAGKS), 191-195 (FTTLV), 213-216 (DIPG), 283-286 (NKVD), and 314-316 (SAA) contribute to the GTP site. 2 residues coordinate Mg(2+): serine 173 and threonine 193.

It belongs to the TRAFAC class OBG-HflX-like GTPase superfamily. OBG GTPase family. In terms of assembly, monomer. Mg(2+) is required as a cofactor.

The protein resides in the cytoplasm. An essential GTPase which binds GTP, GDP and possibly (p)ppGpp with moderate affinity, with high nucleotide exchange rates and a fairly low GTP hydrolysis rate. Plays a role in control of the cell cycle, stress response, ribosome biogenesis and in those bacteria that undergo differentiation, in morphogenesis control. This Pectobacterium atrosepticum (strain SCRI 1043 / ATCC BAA-672) (Erwinia carotovora subsp. atroseptica) protein is GTPase Obg.